Reading from the N-terminus, the 279-residue chain is Ultraviolet N-glycosylase/AP lyase (279 aa).

The 20-residue stretch at 123–142 (LEDLVALPGVGRKTAFVVLG) folds into the HhH domain. [4Fe-4S] cluster-binding residues include cysteine 203, cysteine 210, cysteine 213, and cysteine 219. The interval 256–279 (TAGAAGPRPRAGGXAPGLPAQPFR) is disordered.

The protein belongs to the Nth/MutY family. [4Fe-4S] cluster serves as cofactor.

DNA repair enzyme that has both DNA N-glycosylase activity and AP-lyase activity. Initiates repair at cis-syn pyrimidine dimers. Proceeds via an imino enzyme:DNA intermediate. This is Ultraviolet N-glycosylase/AP lyase (pdg) from Micrococcus luteus (strain ATCC 4698 / DSM 20030 / JCM 1464 / CCM 169 / CCUG 5858 / IAM 1056 / NBRC 3333 / NCIMB 9278 / NCTC 2665 / VKM Ac-2230) (Micrococcus lysodeikticus).